Consider the following 242-residue polypeptide: MSDKLKERKRTPVSHKVIEKRRRDRINRCLNELGKTVPMALAKQSSGKLEKAEILEMTVQYLRALHSADFPRGREKAELLAEFANYFHYGYHECMKNLVHYLTTVERMETKDTKYARILAFLQSKARLGAEPAFPPLGSLPEPDFSYQLHPAGPEFAGHSPGEAAVFPQGSGAGPFPWPPGAARSPALPYLPSAPVPLASPAQQHSPFLTPVQGLDRHYLNLIGHAHPNALNLHTPQHPPVL.

Positions 10–65 (RTPVSHKVIEKRRRDRINRCLNELGKTVPMALAKQSSGKLEKAEILEMTVQYLRAL) constitute a bHLH domain. K48 carries the post-translational modification N6-acetyllysine. Residues 87-122 (FHYGYHECMKNLVHYLTTVERMETKDTKYARILAFL) enclose the Orange domain.

It belongs to the HEY family. In terms of assembly, self-associates. Interacts with HES5 and HEY2.

The protein resides in the nucleus. Its function is as follows. Transcriptional repressor which binds preferentially to the canonical E box sequence 5'-CACGCG-3'. In Homo sapiens (Human), this protein is Hairy and enhancer of split-related protein HELT (HELT).